Reading from the N-terminus, the 247-residue chain is SPX domain-containing protein 5 (247 aa).

The region spanning 1–139 is the SPX domain; sequence MKFGKRLKRQ…GGVLRLPVIA (139 aa). The interval 224–247 is disordered; sequence SDWLIQSVQPPPPPPPSSPLIIPT. Over residues 232–241 the composition is skewed to pro residues; it reads QPPPPPPPSS.

The sequence is that of SPX domain-containing protein 5 (SPX5) from Oryza sativa subsp. indica (Rice).